The following is a 190-amino-acid chain: Peptidyl-prolyl cis-trans isomerase FKBP20-1 (190 aa).

Residue Gly-2 is modified to N-acetylglycine. The PPIase FKBP-type domain maps to 32–121; it reads LPVVDVHYEG…IFEVELVACR (90 aa). Positions 149–163 are enriched in basic and acidic residues; that stretch reads AAAKEDDKKKREEAK. The segment at 149–190 is disordered; that stretch reads AAAKEDDKKKREEAKAAAAARIQAKLDAKKGPGKGKGKGKAK. Positions 179–190 are enriched in basic residues; the sequence is GPGKGKGKGKAK.

This sequence belongs to the FKBP-type PPIase family.

The enzyme catalyses [protein]-peptidylproline (omega=180) = [protein]-peptidylproline (omega=0). In terms of biological role, PPIases accelerate the folding of proteins. It catalyzes the cis-trans isomerization of proline imidic peptide bonds in oligopeptides. This chain is Peptidyl-prolyl cis-trans isomerase FKBP20-1 (FKBP20-1), found in Arabidopsis thaliana (Mouse-ear cress).